The following is a 170-amino-acid chain: CASP-like protein 1F1 (170 aa).

The Cytoplasmic portion of the chain corresponds to 1 to 16; the sequence is MMGDNEGRRTPLLNLG. Residues 17 to 37 traverse the membrane as a helical segment; sequence VQVSMRVLTIGAAMASMWVMI. Topologically, residues 38-62 are extracellular; it reads TNREVASVYGIAFEAKYSYSSAFRY. The chain crosses the membrane as a helical span at residues 63-83; that stretch reads LVYAQIAVCAATLFTLVWACL. The Cytoplasmic segment spans residues 84 to 88; the sequence is AVRRR. Residues 89-109 traverse the membrane as a helical segment; that stretch reads GLVFALFFFDLLTTLTAISAF. Over 110–141 the chain is Extracellular; it reads SAAFAEGYVGKYGNKQAGWLPICGYVHGYCSR. A helical membrane pass occupies residues 142-162; that stretch reads VTISLAMSFASFILLFILTVL. At 163-170 the chain is on the cytoplasmic side; it reads TASAARHY.

It belongs to the Casparian strip membrane proteins (CASP) family. As to quaternary structure, homodimer and heterodimers. In flowers, expressed in the anther wall.

It localises to the cell membrane. This chain is CASP-like protein 1F1, found in Arabidopsis thaliana (Mouse-ear cress).